Here is a 918-residue protein sequence, read N- to C-terminus: Serine/threonine-protein kinase D1 (918 aa).

Tyr93 bears the Phosphotyrosine mark. The Phorbol-ester/DAG-type 1 zinc finger occupies 144–194 (PHALFVHSYRAPAFCDHCGEMLWGLVRQGLKCEGCGLNYHKRCAFKIPNNC). Ser203, Ser206, Ser217, and Ser221 each carry phosphoserine. A Phorbol-ester/DAG-type 2 zinc finger spans residues 276–326 (PHTFVIHSYTRPTVCQFCKKLLKGLFRQGLQCKDCRFNCHKRCAPKVPNNC). Disordered stretches follow at residues 338–362 (SPGAESDVVMEEGSDDNDSERNSGL) and 380–408 (EGQSDGAEMQDPDADQEDSNRTISPSTSN). 2 stretches are compositionally biased toward acidic residues: residues 345 to 355 (VVMEEGSDDND) and 387 to 396 (EMQDPDADQE). Phosphoserine is present on Ser351. 2 positions are modified to phosphoserine; by MAPK13: Ser403 and Ser407. The 120-residue stretch at 428-547 (TVMKEGWMVH…WEVAIQHALM (120 aa)) folds into the PH domain. The residue at position 438 (Tyr438) is a Phosphotyrosine. Ser454 carries the phosphoserine modification. Tyr469 is subject to Phosphotyrosine; by ABL. Tyr508 bears the Phosphotyrosine mark. Ser554 carries the phosphoserine modification. The Protein kinase domain occupies 589 to 845 (IFPDEVLGSG…VDKTLSHPWL (257 aa)). Residues 595 to 603 (LGSGQFGIV) and Lys618 each bind ATP. Asp712 serves as the catalytic Proton acceptor. At Ser744 the chain carries Phosphoserine; by PKC/PRKCD. Ser748 is modified (phosphoserine; by autocatalysis and PKC/PRKCD). Position 755 is a phosphotyrosine (Tyr755). Position 916 is a phosphoserine; by autocatalysis (Ser916).

This sequence belongs to the protein kinase superfamily. CAMK Ser/Thr protein kinase family. PKD subfamily. As to quaternary structure, interacts (via N-terminus) with ADAP1/CENTA1. Interacts with MAPK13. Interacts with DAPK1 in an oxidative stress-regulated manner. Interacts with USP28; the interaction induces phosphorylation of USP28 and activated KRAS-mediated stabilization of ZNF304. Interacts with AKAP13 (via C-terminal domain). It depends on Mg(2+) as a cofactor. Phosphorylated at Ser-403 and Ser-407 by MAPK13 during regulation of insulin secretion in pancreatic beta cells. Phosphorylated by DAPK1. Phosphorylated at Tyr-93 and by ABL at Tyr-469, which primes the kinase in response to oxidative stress, and promotes a second step activating phosphorylation at Ser-744/Ser-748 by PKRD. Phosphorylated on Ser-916 upon S.enterica infection in macrophages.

It localises to the cytoplasm. Its subcellular location is the cell membrane. It is found in the golgi apparatus. The protein localises to the trans-Golgi network. It catalyses the reaction L-seryl-[protein] + ATP = O-phospho-L-seryl-[protein] + ADP + H(+). It carries out the reaction L-threonyl-[protein] + ATP = O-phospho-L-threonyl-[protein] + ADP + H(+). With respect to regulation, activated by DAG and phorbol esters. Phorbol-ester/DAG-type domain 1 binds DAG with high affinity and appears to play the dominant role in mediating translocation to the cell membrane and trans-Golgi network. Phorbol-ester/DAG-type domain 2 binds phorbol ester with higher affinity. Autophosphorylation of Ser-748 and phosphorylation of Ser-744 by PKC relieves auto-inhibition by the PH domain. Phosphorylation on Tyr-469 by the SRC-ABL1 pathway in response to oxidative stress, is also required for activation. Activated by DAPK1 under oxidative stress. Its function is as follows. Serine/threonine-protein kinase that converts transient diacylglycerol (DAG) signals into prolonged physiological effects downstream of PKC, and is involved in the regulation of MAPK8/JNK1 and Ras signaling, Golgi membrane integrity and trafficking, cell survival through NF-kappa-B activation, cell migration, cell differentiation by mediating HDAC7 nuclear export, cell proliferation via MAPK1/3 (ERK1/2) signaling, and plays a role in cardiac hypertrophy, VEGFA-induced angiogenesis, genotoxic-induced apoptosis and flagellin-stimulated inflammatory response. Phosphorylates the epidermal growth factor receptor (EGFR) on dual threonine residues, which leads to the suppression of epidermal growth factor (EGF)-induced MAPK8/JNK1 activation and subsequent JUN phosphorylation. Phosphorylates RIN1, inducing RIN1 binding to 14-3-3 proteins YWHAB, YWHAE and YWHAZ and increased competition with RAF1 for binding to GTP-bound form of Ras proteins (NRAS, HRAS and KRAS). Acts downstream of the heterotrimeric G-protein beta/gamma-subunit complex to maintain the structural integrity of the Golgi membranes, and is required for protein transport along the secretory pathway. In the trans-Golgi network (TGN), regulates the fission of transport vesicles that are on their way to the plasma membrane. May act by activating the lipid kinase phosphatidylinositol 4-kinase beta (PI4KB) at the TGN for the local synthesis of phosphorylated inositol lipids, which induces a sequential production of DAG, phosphatidic acid (PA) and lyso-PA (LPA) that are necessary for membrane fission and generation of specific transport carriers to the cell surface. Under oxidative stress, is phosphorylated at Tyr-469 via SRC-ABL1 and contributes to cell survival by activating IKK complex and subsequent nuclear translocation and activation of NFKB1. Involved in cell migration by regulating integrin alpha-5/beta-3 recycling and promoting its recruitment in newly forming focal adhesion. In osteoblast differentiation, mediates the bone morphogenetic protein 2 (BMP2)-induced nuclear export of HDAC7, which results in the inhibition of HDAC7 transcriptional repression of RUNX2. In neurons, plays an important role in neuronal polarity by regulating the biogenesis of TGN-derived dendritic vesicles, and is involved in the maintenance of dendritic arborization and Golgi structure in hippocampal cells. May potentiate mitogenesis induced by the neuropeptide bombesin or vasopressin by mediating an increase in the duration of MAPK1/3 (ERK1/2) signaling, which leads to accumulation of immediate-early gene products including FOS that stimulate cell cycle progression. Plays an important role in the proliferative response induced by low calcium in keratinocytes, through sustained activation of MAPK1/3 (ERK1/2) pathway. Downstream of novel PKC signaling, plays a role in cardiac hypertrophy by phosphorylating HDAC5, which in turn triggers XPO1/CRM1-dependent nuclear export of HDAC5, MEF2A transcriptional activation and induction of downstream target genes that promote myocyte hypertrophy and pathological cardiac remodeling. Mediates cardiac troponin I (TNNI3) phosphorylation at the PKA sites, which results in reduced myofilament calcium sensitivity, and accelerated crossbridge cycling kinetics. The PRKD1-HDAC5 pathway is also involved in angiogenesis by mediating VEGFA-induced specific subset of gene expression, cell migration, and tube formation. In response to VEGFA, is necessary and required for HDAC7 phosphorylation which induces HDAC7 nuclear export and endothelial cell proliferation and migration. During apoptosis induced by cytarabine and other genotoxic agents, PRKD1 is cleaved by caspase-3 at Asp-378, resulting in activation of its kinase function and increased sensitivity of cells to the cytotoxic effects of genotoxic agents. In epithelial cells, is required for transducing flagellin-stimulated inflammatory responses by binding and phosphorylating TLR5, which contributes to MAPK14/p38 activation and production of inflammatory cytokines. Acts as an activator of NLRP3 inflammasome assembly by mediating phosphorylation of NLRP3. May play a role in inflammatory response by mediating activation of NF-kappa-B. May be involved in pain transmission by directly modulating TRPV1 receptor. Plays a role in activated KRAS-mediated stabilization of ZNF304 in colorectal cancer (CRC) cells. Regulates nuclear translocation of transcription factor TFEB in macrophages upon live S.enterica infection. This is Serine/threonine-protein kinase D1 (Prkd1) from Rattus norvegicus (Rat).